A 505-amino-acid polypeptide reads, in one-letter code: NADH-quinone oxidoreductase subunit N 1 (505 aa).

A run of 14 helical transmembrane segments spans residues 18–38 (LIPEIALGCLALLLLVVEMVL), 45–65 (LIATIAIIGQFGILGWVAWDF), 84–104 (YVGQAMRVFFLLSSIFVSILA), 116–136 (IEFYHIVLVATAAMMLLAQAN), 138–158 (FVLFFVALETLTVGLYILVSY), 173–193 (LIMGALSSSLLLFGIVLLYGV), 223–243 (FLAAAGIVLVLSGIAFKIGAF), 271–291 (AGFAILLVLVNSVFGPYWWLV), 292–312 (QPVLVAMAVATILFGNIAALT), 319–339 (LIGLSGVSHAGFLLIGIIASH), 345–365 (VGAVLFYLFAYLLATFAVFGV), 391–411 (FLAAILAVALGSLAGIPPLAG), 429–449 (GLLAVAIVGVVISIYYYFGWI), and 473–493 (VGAAAGVALATLALCSILFGV).

It belongs to the complex I subunit 2 family. In terms of assembly, NDH-1 is composed of 14 different subunits. Subunits NuoA, H, J, K, L, M, N constitute the membrane sector of the complex.

The protein localises to the cell inner membrane. It catalyses the reaction a quinone + NADH + 5 H(+)(in) = a quinol + NAD(+) + 4 H(+)(out). In terms of biological role, NDH-1 shuttles electrons from NADH, via FMN and iron-sulfur (Fe-S) centers, to quinones in the respiratory chain. The immediate electron acceptor for the enzyme in this species is believed to be ubiquinone. Couples the redox reaction to proton translocation (for every two electrons transferred, four hydrogen ions are translocated across the cytoplasmic membrane), and thus conserves the redox energy in a proton gradient. The chain is NADH-quinone oxidoreductase subunit N 1 from Opitutus terrae (strain DSM 11246 / JCM 15787 / PB90-1).